We begin with the raw amino-acid sequence, 460 residues long: UDP-glycosyltransferase 74B1 (460 aa).

The Proton acceptor role is filled by histidine 22. Histidine 22 is a binding site for an anthocyanidin. Residue aspartate 113 is the Charge relay of the active site. UDP-alpha-D-glucose is bound by residues threonine 135, glutamine 339, histidine 354, tryptophan 357, asparagine 358, serine 359, glutamate 362, aspartate 378, and glutamine 379.

Belongs to the UDP-glycosyltransferase family. As to expression, expressed in the vasculature, the apical meristems of roots, shoots and inflorescence, and the junction of organ or branches.

The catalysed reaction is (Z)-2-phenyl-1-thioacetohydroximate + UDP-alpha-D-glucose = (Z)-desulfoglucotropeolin + UDP. It carries out the reaction a (Z)-omega-(methylsulfanyl)alkyl-thiohydroximate + UDP-alpha-D-glucose = an aliphatic (Z)-desulfo-glucosinolate + UDP. It catalyses the reaction (Z)-2-(indol-3-yl)-1-thioacetohydroximate + UDP-alpha-D-glucose = (Z)-indolylmethyl desulfoglucosinolate + UDP. In terms of biological role, involved in the biosynthesis of glucosinolate. In in vitro assay, may use phenylacetothiohydroximate (PATH), but not phenylacetic acid (PAA), indole-3-acetic acid (IAA) or salicylic acid (SA) as substrate. Specific for the thiohydroximate functional group and does not glucosylate the carboxylate group or a hydroxyl group. The polypeptide is UDP-glycosyltransferase 74B1 (UGT74B1) (Arabidopsis thaliana (Mouse-ear cress)).